The sequence spans 92 residues: Large ribosomal subunit protein bL27 (92 aa).

The tract at residues 1 to 22 (MAHTKAGGSTRNGRDSRGQRLG) is disordered.

Belongs to the bacterial ribosomal protein bL27 family.

This chain is Large ribosomal subunit protein bL27, found in Mycoplasmopsis agalactiae (strain NCTC 10123 / CIP 59.7 / PG2) (Mycoplasma agalactiae).